Consider the following 666-residue polypeptide: Peptidase S41 family protein phomP1' (666 aa).

A signal peptide spans Met-1–Ser-27. Asn-70, Asn-214, and Asn-234 each carry an N-linked (GlcNAc...) asparagine glycan. Residues Asp-303–Val-504 form a peptidase S41 domain region. Asn-555 and Asn-612 each carry an N-linked (GlcNAc...) asparagine glycan.

It belongs to the peptidase S41A family.

The protein operates within mycotoxin biosynthesis. Its function is as follows. Peptidase S41 family protein; part of the gene cluster that mediates the biosynthesis of the phomopsins, a group of hexapeptide mycotoxins which infects lupins and causes lupinosis disease in livestock. Within the pathway, phomP1 and phomP1' are probably involved in the processing of the phomA and phomA' precursors. The pathway starts with the processing of the precursor phomA by several endopeptidases including kexin proteases as well as the cluster-specific S41 family peptidase phomP1 and the oligopeptidase phomG to produce 10 identical copies of the hexapeptide Tyr-Val-Ile-Pro-Ile-Asp. After being excised from the precursor peptide, the core peptides are cyclized and modified post-translationally by enzymes encoded within the gene cluster. The timing and order of proteolysis of the phomA precursor and PTMs are still unknown. Two tyrosinase-like enzymes, phomQ1 and phomQ2, catalyze the chlorination and hydroxylation of Tyr, respectively. PhomYb, is proposed to be involved in the construction of the macrocyclic structure. The other 4 ustYa family proteins may be involved in PTMs that generate the unique structure of phomopsin A. PhomYa is required for the hydroxylation of C-beta of Tyr. PhomYc, phomYd, and phomYe are responsible for the biosynthesis of 2,3-dehydroisoleucine (dIle), 2,3-dehydroaspartic acid (dAsp), and 3,4-dehydroproline (dPro), respectively. While dIle formation by phomYc is indispensable for the installation of dAsp by phomYd, the order of the other PTMs have not been elucidated yet. Most of the biosynthetic enzymes likely have broad substrate specificity, and thus, there might be a metabolic grid from a precursor to phomopsin A. The enzyme(s) responsible for the biosynthesis of 3,4-dehydrovaline (dVal) have also not been identified yet. Finally, phomM acts as an S-adenosylmethionine-dependent alpha-N-methyltransferase that catalyzes two successive N-methylation reactions, converting N-desmethyl-phomopsin A to phomopsin A and phomopsin A further to an N,N-dimethylated congener called phomopsin E. This chain is Peptidase S41 family protein phomP1', found in Diaporthe leptostromiformis (Lupinosis disease fungus).